The following is a 414-amino-acid chain: Probable indole-3-pyruvate monooxygenase YUCCA1 (414 aa).

25 to 30 (GAGPSG) is an FAD binding site. 189-194 (GCGNSG) provides a ligand contact to NADP(+).

Belongs to the FMO family. It depends on FAD as a cofactor. In terms of tissue distribution, expressed in the apical meristems and young floral primordia. Detected in the floral meristems and at the base of the floral organs.

The enzyme catalyses indole-3-pyruvate + NADPH + O2 + H(+) = (indol-3-yl)acetate + CO2 + NADP(+) + H2O. It functions in the pathway plant hormone metabolism; auxin biosynthesis. Functionally, involved in auxin biosynthesis, but not in the tryptamine or the CYP79B2/B3 branches. Catalyzes in vitro the N-oxidation of tryptamine to form N-hydroxyl tryptamine. Involved during embryogenesis and seedling development. Required for the formation of floral organs and vascular tissues. Belongs to the set of redundant YUCCA genes probably responsible for auxin biosynthesis in shoots. The protein is Probable indole-3-pyruvate monooxygenase YUCCA1 (YUC1) of Arabidopsis thaliana (Mouse-ear cress).